A 460-amino-acid chain; its full sequence is Elongation factor 1-alpha (460 aa).

The residue at position 2 (Gly-2) is a N,N,N-trimethylglycine. Lys-3 carries the N6,N6-dimethyllysine; alternate modification. An N6-methyllysine; alternate modification is found at Lys-3. The region spanning 6-241 is the tr-type G domain; the sequence is KAHINVVVIG…DAIEQPKRPT (236 aa). The tract at residues 15-22 is G1; it reads GHVDSGKS. 15-22 provides a ligand contact to GTP; sequence GHVDSGKS. Lys-31 carries the N6-methyllysine modification. The interval 71 to 75 is G2; sequence GITID. An N6,N6,N6-trimethyllysine modification is found at Lys-80. Positions 92-95 are G3; that stretch reads DAPG. Residues 92-96 and 154-157 contribute to the GTP site; these read DAPGH and NKMD. A G4 region spans residues 154–157; that stretch reads NKMD. Residues 193–195 form a G5 region; it reads SGF. N6,N6-dimethyllysine; alternate is present on Lys-317. At Lys-317 the chain carries N6-methyllysine; alternate. Lys-391 carries the post-translational modification N6-methyllysine.

Belongs to the TRAFAC class translation factor GTPase superfamily. Classic translation factor GTPase family. EF-Tu/EF-1A subfamily.

Its subcellular location is the cytoplasm. In terms of biological role, this protein promotes the GTP-dependent binding of aminoacyl-tRNA to the A-site of ribosomes during protein biosynthesis. This chain is Elongation factor 1-alpha (TEF), found in Sordaria macrospora.